The chain runs to 338 residues: L-serine dehydratase (338 aa).

At Lys39 the chain carries N6-(pyridoxal phosphate)lysine.

It belongs to the serine/threonine dehydratase family. Requires pyridoxal 5'-phosphate as cofactor.

The protein localises to the cytoplasm. The enzyme catalyses L-serine = pyruvate + NH4(+). The protein operates within carbohydrate biosynthesis; gluconeogenesis. In Saccharomyces cerevisiae (strain YJM789) (Baker's yeast), this protein is L-serine dehydratase (SDL1).